A 126-amino-acid chain; its full sequence is DNA-directed RNA polymerase subunit omega (126 aa).

It belongs to the RNA polymerase subunit omega family. As to quaternary structure, the RNAP catalytic core consists of 2 alpha, 1 beta, 1 beta' and 1 omega subunit. When a sigma factor is associated with the core the holoenzyme is formed, which can initiate transcription.

The catalysed reaction is RNA(n) + a ribonucleoside 5'-triphosphate = RNA(n+1) + diphosphate. Promotes RNA polymerase assembly. Latches the N- and C-terminal regions of the beta' subunit thereby facilitating its interaction with the beta and alpha subunits. This Rickettsia felis (strain ATCC VR-1525 / URRWXCal2) (Rickettsia azadi) protein is DNA-directed RNA polymerase subunit omega.